The primary structure comprises 130 residues: MVRASVLNDCLKSMSNAEKQGKRQVMIRPSSKVIIKFLTVMQKHGYIAEFEYVDDHRSGKIVVELNGRLNNCGVISPRYDLGVKEIEGWTAKLLPSRQFGYIVLTTSAGIMDHEEARKKNVGGKVLGFFY.

This sequence belongs to the universal ribosomal protein uS8 family.

This Arabidopsis thaliana (Mouse-ear cress) protein is Small ribosomal subunit protein uS8y (RPS15AC).